A 409-amino-acid chain; its full sequence is Translation initiation factor 2 subunit gamma (409 aa).

Positions 7–203 (QPEVNIGLVG…TIESEIPTPD (197 aa)) constitute a tr-type G domain. Residues 16 to 23 (GHVDHGKT) form a G1 region. Residues Asp19, Thr23, Gly44, and Ser46 each contribute to the Mg(2+) site. A GTP-binding site is contributed by 19–24 (DHGKTT). The segment at 44 to 48 (GISIR) is G2. The tract at residues 90-93 (DAPG) is G3. GTP contacts are provided by residues 146–149 (NKID) and 181–183 (SAQ). The segment at 146–149 (NKID) is G4. A G5 region spans residues 181 to 183 (SAQ).

It belongs to the TRAFAC class translation factor GTPase superfamily. Classic translation factor GTPase family. EIF2G subfamily. Heterotrimer composed of an alpha, a beta and a gamma chain. Mg(2+) is required as a cofactor.

It catalyses the reaction GTP + H2O = GDP + phosphate + H(+). Functionally, eIF-2 functions in the early steps of protein synthesis by forming a ternary complex with GTP and initiator tRNA. In Natronomonas pharaonis (strain ATCC 35678 / DSM 2160 / CIP 103997 / JCM 8858 / NBRC 14720 / NCIMB 2260 / Gabara) (Halobacterium pharaonis), this protein is Translation initiation factor 2 subunit gamma.